The following is a 334-amino-acid chain: MFKKYSSLENHYNSKFIEKLYSLGLTGGEWVAREKIHGTNFSLIIERDKVTCAKRTGPILPAEDFFGYEIILKNYADSIKAVQDIMETSAVVSYQVFGEFAGPGIQKNVDYCDKDFYVFDIIVTTESGDVTYVDDYMMESFCNTFKFKMAPLLGRGKFEELIKLPNDLDSVVQDYNFTVDHAGLVDANKCVWNAEAKGEVFTAEGYVLKPCYPSWLRNGNRVAIKCKNSKFSEKKKSDKPIKAKVELSEADNKLVGILACYVTLNRVNNVISKIGEIGPKDFGKVMGLTVQDILEETSREGITLTQADNPSLIKKELVKMVQDVLRPAWIELVS.

Residues 1–234 form an adenylyltransferase region; that stretch reads MFKKYSSLEN…KCKNSKFSEK (234 aa). Positions 34, 35, 36, 40, 55, and 99 each coordinate AMP. Lys-35 functions as the N6-AMP-lysine intermediate in the catalytic mechanism. Mg(2+) contacts are provided by Ile-162, Leu-164, Asn-166, Glu-204, and Tyr-206. AMP is bound by residues Lys-225 and Lys-227.

This sequence belongs to the RNA ligase 2 family. The cofactor is Mg(2+). Mn(2+) is required as a cofactor.

The enzyme catalyses ATP + (ribonucleotide)n-3'-hydroxyl + 5'-phospho-(ribonucleotide)m = (ribonucleotide)n+m + AMP + diphosphate.. In terms of biological role, repairs 3'-OH/5'-PO4 nicks in duplex RNA or RNA:DNA hybrid in which the broken 3'-OH strand is RNA. The nick ligation reaction entails three nucleotidyl transfer steps. In the first step, the RNA ligase reacts with ATP in the absence of nucleic acid to form a covalent ligase-AMP intermediate and release pyrophosphate. In step 2, the ligase-AMP binds to the nicked duplex nucleic acid and transfers the adenylate to the 5'-PO4 terminus to form an adenylylated nicked intermediate. In step 3, the RNA ligase directs the attack of the nick 3'-OH on the 5'-phosphoanhydride linkage, resulting in a repaired 3' - 5' phosphodiester and release of AMP. The chain is RNA ligase 2 (Y10A) from Enterobacteria phage T4 (Bacteriophage T4).